The following is a 656-amino-acid chain: tRNA(Met) cytidine acetyltransferase TmcA (656 aa).

Residues Gln-145, 167–176 (GRGKSALLGM), and Arg-291 each bind ATP. Positions 368 to 542 (SEGKYNRQFF…SGCYSAIALK (175 aa)) constitute an N-acetyltransferase domain. Acetyl-CoA is bound by residues 474 to 476 (IAV), 481 to 487 (QQKGIGQ), and Glu-510.

It belongs to the RNA cytidine acetyltransferase family. TmcA subfamily.

It localises to the cytoplasm. It carries out the reaction cytidine(34) in elongator tRNA(Met) + acetyl-CoA + ATP + H2O = N(4)-acetylcytidine(34) in elongator tRNA(Met) + ADP + phosphate + CoA + H(+). In terms of biological role, catalyzes the formation of N(4)-acetylcytidine (ac(4)C) at the wobble position of tRNA(Met), by using acetyl-CoA as an acetyl donor and ATP (or GTP). This chain is tRNA(Met) cytidine acetyltransferase TmcA, found in Haemophilus influenzae (strain ATCC 51907 / DSM 11121 / KW20 / Rd).